An 842-amino-acid chain; its full sequence is GPI ethanolamine phosphate transferase 2 (842 aa).

A glycan (N-linked (GlcNAc...) asparagine) is linked at asparagine 186. Residues 409 to 429 (YNYPLLFIGCFLSIVITGTIY) traverse the membrane as a helical segment. The N-linked (GlcNAc...) asparagine glycan is linked to asparagine 441. 2 helical membrane passes run 442-462 (TSIL…SSFI) and 468-488 (FWWW…NFSS). N-linked (GlcNAc...) asparagine glycosylation is present at asparagine 506. Residues 524-544 (GNIDALWWLNLITVTVVGLNL) form a helical membrane-spanning segment. Asparagine 551 carries N-linked (GlcNAc...) asparagine glycosylation. The helical transmembrane segment at 554–574 (VSLLGFSDLLSMGLLSMITFL) threads the bilayer. Residue asparagine 578 is glycosylated (N-linked (GlcNAc...) asparagine). The next 3 helical transmembrane spans lie at 615 to 635 (IHTA…AVLV), 698 to 718 (YLLA…QSGG), and 740 to 760 (IYVV…YWSF). N-linked (GlcNAc...) asparagine glycosylation is present at asparagine 771. 2 helical membrane passes run 783 to 803 (YPFI…CIIL) and 821 to 841 (MVWT…LLLL).

Belongs to the PIGG/PIGN/PIGO family. PIGG subfamily.

Its subcellular location is the endoplasmic reticulum membrane. Its pathway is glycolipid biosynthesis; glycosylphosphatidylinositol-anchor biosynthesis. Ethanolamine phosphate transferase involved in glycosylphosphatidylinositol-anchor biosynthesis. Transfers ethanolamine phosphate to the GPI second mannose. The protein is GPI ethanolamine phosphate transferase 2 (LAS21) of Candida glabrata (strain ATCC 2001 / BCRC 20586 / JCM 3761 / NBRC 0622 / NRRL Y-65 / CBS 138) (Yeast).